A 184-amino-acid chain; its full sequence is Large ribosomal subunit protein bL9 (184 aa).

Residues 160 to 184 form a disordered region; sequence LQNQKSEQQEAEQDANKEATDGDDS. Residues 173–184 show a composition bias toward basic and acidic residues; sequence DANKEATDGDDS.

Belongs to the bacterial ribosomal protein bL9 family.

Functionally, binds to the 23S rRNA. This Wolbachia pipientis wMel protein is Large ribosomal subunit protein bL9.